Reading from the N-terminus, the 156-residue chain is Small ribosomal subunit protein uS7c (156 aa).

This sequence belongs to the universal ribosomal protein uS7 family. Part of the 30S ribosomal subunit.

The protein resides in the plastid. Its subcellular location is the chloroplast. One of the primary rRNA binding proteins, it binds directly to 16S rRNA where it nucleates assembly of the head domain of the 30S subunit. This Pisum sativum (Garden pea) protein is Small ribosomal subunit protein uS7c (rps7).